A 217-amino-acid chain; its full sequence is Adenosylcobinamide-GDP ribazoletransferase (217 aa).

5 helical membrane passes run 6-26 (ALLS…FKCA), 39-61 (GPAA…LLLM), 95-115 (GTGG…STAS), 116-136 (PLQL…VAAF), and 162-182 (ALAV…AVAL).

Belongs to the CobS family. Requires Mg(2+) as cofactor.

The protein localises to the cell membrane. The enzyme catalyses alpha-ribazole + adenosylcob(III)inamide-GDP = adenosylcob(III)alamin + GMP + H(+). It catalyses the reaction alpha-ribazole 5'-phosphate + adenosylcob(III)inamide-GDP = adenosylcob(III)alamin 5'-phosphate + GMP + H(+). The protein operates within cofactor biosynthesis; adenosylcobalamin biosynthesis; adenosylcobalamin from cob(II)yrinate a,c-diamide: step 7/7. Functionally, joins adenosylcobinamide-GDP and alpha-ribazole to generate adenosylcobalamin (Ado-cobalamin). Also synthesizes adenosylcobalamin 5'-phosphate from adenosylcobinamide-GDP and alpha-ribazole 5'-phosphate. The protein is Adenosylcobinamide-GDP ribazoletransferase of Pyrobaculum calidifontis (strain DSM 21063 / JCM 11548 / VA1).